The sequence spans 471 residues: Glutamate--tRNA ligase (471 aa).

The 'HIGH' region signature appears at 9-19 (PSPTGYLHVGG). Positions 98, 100, 125, and 127 each coordinate Zn(2+). Residues 237–241 (KLSKR) carry the 'KMSKS' region motif. Lys-240 contacts ATP.

Belongs to the class-I aminoacyl-tRNA synthetase family. Glutamate--tRNA ligase type 1 subfamily. As to quaternary structure, monomer. The cofactor is Zn(2+).

The protein localises to the cytoplasm. It carries out the reaction tRNA(Glu) + L-glutamate + ATP = L-glutamyl-tRNA(Glu) + AMP + diphosphate. Catalyzes the attachment of glutamate to tRNA(Glu) in a two-step reaction: glutamate is first activated by ATP to form Glu-AMP and then transferred to the acceptor end of tRNA(Glu). The protein is Glutamate--tRNA ligase of Salmonella paratyphi A (strain ATCC 9150 / SARB42).